The sequence spans 247 residues: UPF0273 protein PF1931 (247 aa).

The KaiC domain maps to 3–247; it reads RRVKTGIPGM…VLKRGRIYEL (245 aa). 30-37 serves as a coordination point for ATP; the sequence is GGPGTGKS.

The protein belongs to the UPF0273 family.

This is UPF0273 protein PF1931 from Pyrococcus furiosus (strain ATCC 43587 / DSM 3638 / JCM 8422 / Vc1).